The primary structure comprises 138 residues: NADH-quinone oxidoreductase subunit A 1 (138 aa).

Helical transmembrane passes span 19–39 (FLPL…LLLA), 74–94 (FYLI…IFAW), and 103–123 (LAGL…LVWL).

It belongs to the complex I subunit 3 family. In terms of assembly, NDH-1 is composed of 14 different subunits. Subunits NuoA, H, J, K, L, M, N constitute the membrane sector of the complex.

It localises to the cell inner membrane. It carries out the reaction a quinone + NADH + 5 H(+)(in) = a quinol + NAD(+) + 4 H(+)(out). NDH-1 shuttles electrons from NADH, via FMN and iron-sulfur (Fe-S) centers, to quinones in the respiratory chain. The immediate electron acceptor for the enzyme in this species is believed to be ubiquinone. Couples the redox reaction to proton translocation (for every two electrons transferred, four hydrogen ions are translocated across the cytoplasmic membrane), and thus conserves the redox energy in a proton gradient. In Geobacter metallireducens (strain ATCC 53774 / DSM 7210 / GS-15), this protein is NADH-quinone oxidoreductase subunit A 1.